Reading from the N-terminus, the 512-residue chain is ATP synthase subunit alpha (512 aa).

169 to 176 (GDRQTGKT) lines the ATP pocket.

It belongs to the ATPase alpha/beta chains family. F-type ATPases have 2 components, CF(1) - the catalytic core - and CF(0) - the membrane proton channel. CF(1) has five subunits: alpha(3), beta(3), gamma(1), delta(1), epsilon(1). CF(0) has three main subunits: a(1), b(2) and c(9-12). The alpha and beta chains form an alternating ring which encloses part of the gamma chain. CF(1) is attached to CF(0) by a central stalk formed by the gamma and epsilon chains, while a peripheral stalk is formed by the delta and b chains.

It localises to the cell inner membrane. The enzyme catalyses ATP + H2O + 4 H(+)(in) = ADP + phosphate + 5 H(+)(out). Its function is as follows. Produces ATP from ADP in the presence of a proton gradient across the membrane. The alpha chain is a regulatory subunit. This Orientia tsutsugamushi (strain Boryong) (Rickettsia tsutsugamushi) protein is ATP synthase subunit alpha.